A 222-amino-acid polypeptide reads, in one-letter code: Lipid transferase CIDEC (222 aa).

The segment covering 1 to 19 (MAMYTAVSTSVVTQQQLSE) has biased composition (polar residues). 2 disordered regions span residues 1 to 33 (MAMY…CRVT) and 203 to 222 (EQPP…KMLQ). The tract at residues 1–33 (MAMYTAVSTSVVTQQQLSEPSAEAPRARPCRVT) is required for liquid-liquid phase separation (LLPS). The CIDE-N domain maps to 26–103 (RARPCRVTTA…VLHKGQKWQP (78 aa)).

It belongs to the CIDE family. As to quaternary structure, homodimer. Homooligomer; undergoes liquid-liquid phase separation (LLPS) via its N-terminus, facilitating lipid droplet fusion, occurs at the lipid droplet contact sites. Interacts with CIDEA. Interacts with PLIN1. Interacts with NFAT5; this interaction is direct and retains NFAT5 in the cytoplasm. Interacts with CEBPB. Interacts with isoform CLSTN3beta of CLSTN3; inhibiting the lipid transferase activity of CIDEC. Ubiquitinated and targeted to proteasomal degradation, resulting in a short half-life (about 15 minutes in 3T3-L1 cells). Protein stability depends on triaclyglycerol synthesis, fatty acid availability and lipid droplet formation.

The protein localises to the lipid droplet. It is found in the endoplasmic reticulum. The protein resides in the nucleus. It catalyses the reaction a triacyl-sn-glycerol(in) = a triacyl-sn-glycerol(out). In terms of biological role, lipid transferase specifically expressed in white adipose tissue, which promotes unilocular lipid droplet formation by mediating lipid droplet fusion. Lipid droplet fusion promotes their enlargement, restricting lipolysis and favoring lipid storage. Localizes on the lipid droplet surface, at focal contact sites between lipid droplets, and mediates atypical lipid droplet fusion by undergoing liquid-liquid phase separation (LLPS) and promoting directional net neutral lipid transfer from the smaller to larger lipid droplets. The transfer direction may be driven by the internal pressure difference between the contacting lipid droplet pair. Its role in neutral lipid transfer and lipid droplet enlargement is activated by the interaction with PLIN1. May also act as a CEBPB coactivator in the white adipose tissue to control the expression of a subset of CEBPB downstream target genes, including SOCS1, SOCS3, TGFB1, TGFBR1, ID2 and XDH. When overexpressed in preadipocytes, induces apoptosis or increases cell susceptibility to apoptosis induced by serum deprivation or TGFB treatment. The chain is Lipid transferase CIDEC from Bos taurus (Bovine).